The primary structure comprises 228 residues: MRAPLCLLLLLAHAVDMLALYRRKKQAGTGLGGNCTGCVICSEENGCSTCQQRLFLFIRREGIRQYGKCVHDCPLGFFGIRGQEANRCKKCGATCESCFSQDFCIRCKRRFHLYKGKCLPSCPPGTLTHQSTRECQEECEPSPWGSWSPCIHNGKTCGSGWGLETRVREAGPAKQEETASCRVLSESRKCPIKRLCPGERNPRQKNRKDRRQRKDRKLERRPHQRGSQ.

The signal sequence occupies residues 1–19; the sequence is MRAPLCLLLLLAHAVDMLA. N34 carries N-linked (GlcNAc...) asparagine glycosylation. 11 disulfides stabilise this stretch: C35–C41, C38–C47, C50–C69, C73–C88, C91–C98, C95–C104, C107–C118, C122–C135, C139–C181, C150–C157, and C190–C196. An FU repeat occupies 85–128; sequence ANRCKKCGATCESCFSQDFCIRCKRRFHLYKGKCLPSCPPGTLT. Residues 138–197 form the TSP type-1 domain; the sequence is ECEPSPWGSWSPCIHNGKTCGSGWGLETRVREAGPAKQEETASCRVLSESRKCPIKRLCP. The disordered stretch occupies residues 193-228; the sequence is KRLCPGERNPRQKNRKDRRQRKDRKLERRPHQRGSQ. Over residues 203-228 the composition is skewed to basic residues; it reads RQKNRKDRRQRKDRKLERRPHQRGSQ.

This sequence belongs to the R-spondin family. Binds heparin. Interacts with LGR4, LGR5 and LGR6.

It is found in the secreted. Activator of the canonical Wnt signaling pathway by acting as a ligand for LGR4-6 receptors. Upon binding to LGR4-6 (LGR4, LGR5 or LGR6), LGR4-6 associate with phosphorylated LRP6 and frizzled receptors that are activated by extracellular Wnt receptors, triggering the canonical Wnt signaling pathway to increase expression of target genes. Also regulates the canonical Wnt/beta-catenin-dependent pathway and non-canonical Wnt signaling by acting as an inhibitor of ZNRF3, an important regulator of the Wnt signaling pathway. This is R-spondin-4 (Rspo4) from Mus musculus (Mouse).